Here is a 530-residue protein sequence, read N- to C-terminus: Lysine--tRNA ligase (530 aa).

Positions 28-36 (PSGHIHVGN) match the 'HIGH' region motif. Residues 278–282 (PMSSS) carry the 'KMSKS' region motif.

The protein belongs to the class-I aminoacyl-tRNA synthetase family.

It localises to the cytoplasm. It carries out the reaction tRNA(Lys) + L-lysine + ATP = L-lysyl-tRNA(Lys) + AMP + diphosphate. This is Lysine--tRNA ligase (lysS) from Methanocaldococcus jannaschii (strain ATCC 43067 / DSM 2661 / JAL-1 / JCM 10045 / NBRC 100440) (Methanococcus jannaschii).